The sequence spans 79 residues: Sigma-O factor regulatory protein RsoA (79 aa).

In terms of biological role, together with RNA polymerase sigma factor SigO, positively regulates the expression of at least three operons, including oxdC-yvrL, sigO-rsoA and yvrJ. Required for the acid stress-dependent induction of the oxalate decarboxylase oxdC. This chain is Sigma-O factor regulatory protein RsoA (rsoA), found in Bacillus subtilis (strain 168).